A 425-amino-acid polypeptide reads, in one-letter code: Enolase (425 aa).

Position 163 (Q163) interacts with (2R)-2-phosphoglycerate. The active-site Proton donor is E205. Mg(2+) contacts are provided by D242, E285, and D312. (2R)-2-phosphoglycerate is bound by residues K337, R366, S367, and K388. The active-site Proton acceptor is the K337.

It belongs to the enolase family. Requires Mg(2+) as cofactor.

Its subcellular location is the cytoplasm. The protein localises to the secreted. The protein resides in the cell surface. It catalyses the reaction (2R)-2-phosphoglycerate = phosphoenolpyruvate + H2O. It participates in carbohydrate degradation; glycolysis; pyruvate from D-glyceraldehyde 3-phosphate: step 4/5. Catalyzes the reversible conversion of 2-phosphoglycerate (2-PG) into phosphoenolpyruvate (PEP). It is essential for the degradation of carbohydrates via glycolysis. This Cereibacter sphaeroides (strain ATCC 17029 / ATH 2.4.9) (Rhodobacter sphaeroides) protein is Enolase.